The following is a 460-amino-acid chain: MTSYSTNMRIKLPLFCLLLQFITIILFAVFVRYDHESDARGWHEELNNHSSSNADNDFYYRYPSFQDVHVMIFIGFGFLMTFLKRYGFSSVAFNFLIAAFGLQWSTLIQGFFHGFHDGKIHVGIESMINADFCTGAVLISFGAVLGKTSPVQLIIMTLVEVTLFGINEYIILNIVGAKDAGGSMTIHTFGAYFGLIVSRVLYREDLEKSRQREGSVYHSDLFAMIGTIYLWMFWPSFNSAVTAHGDDQHRTVMNTYYSLAACTLATFGFSALLNGEGKLDMVHIQNAALAGGVAVGTSGEMMLTPFGAMIAGTLAGMISVLGYKYLTPVLDSKLKIQDTCGVHNLHGMPGILGAIIGAIVALFATADIYGDGMGDVFPLISDGSRTAKQQSLYQFLALLVALGFAIIGGTVVGFILKLPIFGTPSDAECFEDAIYWEVPGGEGHQQLTVVINNEDPDTQA.

Topologically, residues 1–10 are cytoplasmic; the sequence is MTSYSTNMRI. The chain crosses the membrane as a helical span at residues 11–31; it reads KLPLFCLLLQFITIILFAVFV. Over 32–62 the chain is Extracellular; it reads RYDHESDARGWHEELNNHSSSNADNDFYYRY. N48 carries an N-linked (GlcNAc...) asparagine glycan. Residues 63–83 form a helical membrane-spanning segment; that stretch reads PSFQDVHVMIFIGFGFLMTFL. At 84–87 the chain is on the cytoplasmic side; it reads KRYG. The helical transmembrane segment at 88 to 108 threads the bilayer; it reads FSSVAFNFLIAAFGLQWSTLI. The Extracellular segment spans residues 109–125; that stretch reads QGFFHGFHDGKIHVGIE. Residues 126–146 traverse the membrane as a helical segment; the sequence is SMINADFCTGAVLISFGAVLG. The Cytoplasmic segment spans residues 147 to 150; it reads KTSP. Residues 151-171 traverse the membrane as a helical segment; the sequence is VQLIIMTLVEVTLFGINEYII. The Extracellular portion of the chain corresponds to 172 to 179; it reads LNIVGAKD. Residues 180-202 traverse the membrane as a helical segment; that stretch reads AGGSMTIHTFGAYFGLIVSRVLY. The Cytoplasmic portion of the chain corresponds to 203–220; that stretch reads REDLEKSRQREGSVYHSD. The helical transmembrane segment at 221–241 threads the bilayer; the sequence is LFAMIGTIYLWMFWPSFNSAV. The Extracellular segment spans residues 242–252; that stretch reads TAHGDDQHRTV. The chain crosses the membrane as a helical span at residues 253-273; that stretch reads MNTYYSLAACTLATFGFSALL. Residues 274 to 283 are Cytoplasmic-facing; it reads NGEGKLDMVH. Residues 284 to 304 form a helical membrane-spanning segment; sequence IQNAALAGGVAVGTSGEMMLT. A topological domain (extracellular) is located at residue P305. The helical transmembrane segment at 306–326 threads the bilayer; it reads FGAMIAGTLAGMISVLGYKYL. Residues 327 to 347 are Cytoplasmic-facing; it reads TPVLDSKLKIQDTCGVHNLHG. A helical transmembrane segment spans residues 348-368; that stretch reads MPGILGAIIGAIVALFATADI. Over 369 to 394 the chain is Extracellular; sequence YGDGMGDVFPLISDGSRTAKQQSLYQ. A helical membrane pass occupies residues 395–415; it reads FLALLVALGFAIIGGTVVGFI. Topologically, residues 416 to 460 are cytoplasmic; it reads LKLPIFGTPSDAECFEDAIYWEVPGGEGHQQLTVVINNEDPDTQA.

The protein belongs to the ammonium transporter (TC 2.A.49) family. Rh subfamily.

Its subcellular location is the basolateral cell membrane. The protein resides in the cytoplasmic vesicle membrane. In terms of biological role, functions as a specific ammonium transporter. This chain is Ammonium transporter Rh type B-B (rhbg-b), found in Xenopus laevis (African clawed frog).